Here is a 75-residue protein sequence, read N- to C-terminus: uncharacterized protein (75 aa).

A disordered region spans residues 1 to 23; the sequence is MADAMDLAQLREQEDRERHISNA. Residues 9-20 show a composition bias toward basic and acidic residues; the sequence is QLREQEDRERHI. Residues 35 to 59 form a dksA C4-type zinc finger; sequence CEECDAPIPEARRRAIPGVQCCVTC.

This is an uncharacterized protein from Escherichia phage 186 (Bacteriophage 186).